Consider the following 1185-residue polypeptide: 1-phosphatidylinositol 4,5-bisphosphate phosphodiesterase beta-2 (1185 aa).

A PI-PLC X-box domain is found at 312–463 (HDMTQPLNHY…LRGKILIKNK (152 aa)). Residue His327 is part of the active site. Ca(2+) is bound by residues Asn328, Glu357, and Asp359. The active site involves His374. Position 408 (Glu408) interacts with Ca(2+). Residues 460 to 533 (IKNKKNQFSG…EEIKKMQSDE (74 aa)) are disordered. Polar residues predominate over residues 465 to 476 (NQFSGPTSSSKD). Acidic residues predominate over residues 501-524 (EGTELEEEEVEEEEEEESGNLDEE). In terms of domain architecture, PI-PLC Y-box spans 546-662 (MSSLVNYIQP…GYLLKHEFMR (117 aa)). The 129-residue stretch at 662–790 (RRPDKQFNPF…CLHSESNMPL (129 aa)) folds into the C2 domain. Disordered stretches follow at residues 859 to 888 (LAPTSNGSPAARAGAREEAMKEAAEPRTAS) and 943 to 979 (GACKLGPGKGSRKKRSLPREESAGAAPGEGPEGVDGR). Residues 872–888 (GAREEAMKEAAEPRTAS) show a composition bias toward basic and acidic residues. Phosphoserine is present on Ser953. A coiled-coil region spans residues 988-1147 (ELELLRQGEE…VKESVRACLR (160 aa)).

As to quaternary structure, interacts with RAC1. Forms a complex composed of at least WDR26, a G-beta:gamma unit, and PLCB2. It depends on Ca(2+) as a cofactor.

The enzyme catalyses a 1,2-diacyl-sn-glycero-3-phospho-(1D-myo-inositol-4,5-bisphosphate) + H2O = 1D-myo-inositol 1,4,5-trisphosphate + a 1,2-diacyl-sn-glycerol + H(+). The catalysed reaction is a 1,2-diacyl-sn-glycero-3-phospho-(1D-myo-inositol) + H2O = 1D-myo-inositol 1-phosphate + a 1,2-diacyl-sn-glycerol + H(+). Functionally, the production of the second messenger molecules diacylglycerol (DAG) and inositol 1,4,5-trisphosphate (IP3) is mediated by activated phosphatidylinositol-specific phospholipase C enzymes. In neutrophils, participates in a phospholipase C-activating N-formyl peptide-activated GPCR (G protein-coupled receptor) signaling pathway by promoting RASGRP4 activation by DAG, to promote neutrophil functional responses. The protein is 1-phosphatidylinositol 4,5-bisphosphate phosphodiesterase beta-2 of Homo sapiens (Human).